We begin with the raw amino-acid sequence, 472 residues long: Uronate isomerase (472 aa).

Belongs to the metallo-dependent hydrolases superfamily. Uronate isomerase family.

It carries out the reaction D-glucuronate = D-fructuronate. It catalyses the reaction aldehydo-D-galacturonate = keto-D-tagaturonate. Its pathway is carbohydrate metabolism; pentose and glucuronate interconversion. This is Uronate isomerase from Oceanobacillus iheyensis (strain DSM 14371 / CIP 107618 / JCM 11309 / KCTC 3954 / HTE831).